The sequence spans 306 residues: Dihydroorotate dehydrogenase B (NAD(+)), catalytic subunit (306 aa).

FMN is bound by residues serine 22 and 46 to 47; that span reads KT. Substrate-binding positions include lysine 46, 70 to 74, and asparagine 128; that span reads NSIGL. Asparagine 128 contributes to the FMN binding site. Catalysis depends on cysteine 131, which acts as the Nucleophile. Lysine 164 lines the FMN pocket. Position 191-192 (191-192) interacts with substrate; it reads NT. Residues glycine 216, 242 to 243, and 264 to 265 each bind FMN; these read GG and GS.

This sequence belongs to the dihydroorotate dehydrogenase family. Type 1 subfamily. As to quaternary structure, heterotetramer of 2 PyrK and 2 PyrD type B subunits. FMN serves as cofactor.

It localises to the cytoplasm. The catalysed reaction is (S)-dihydroorotate + NAD(+) = orotate + NADH + H(+). The protein operates within pyrimidine metabolism; UMP biosynthesis via de novo pathway; orotate from (S)-dihydroorotate (NAD(+) route): step 1/1. In terms of biological role, catalyzes the conversion of dihydroorotate to orotate with NAD(+) as electron acceptor. The sequence is that of Dihydroorotate dehydrogenase B (NAD(+)), catalytic subunit (pyrD) from Endomicrobium trichonymphae.